The primary structure comprises 689 residues: E3 ubiquitin-protein ligase RNF43 (689 aa).

Positions 1 to 27 (MNRARLQLASLWLLLTVTLQAVASAMG) are cleaved as a signal peptide. Over 28 to 191 (TTEREMDVKA…VQEQPKWLHH (164 aa)) the chain is Extracellular. 2 N-linked (GlcNAc...) asparagine glycosylation sites follow: Asn56 and Asn86. Cys85 and Cys113 are oxidised to a cystine. A helical membrane pass occupies residues 192–212 (DIWILLTVAGTVMFFVLYAVA). At 213–689 (RLLCRQPPPQ…EIEAVCEHAV (477 aa)) the chain is on the cytoplasmic side. The RING-type; atypical zinc finger occupies 268–308 (CAICLEEFTDGQELRILPCCHEYHLGCVDPWLRQNHTCPLC). Disordered stretches follow at residues 386 to 430 (QMRT…HGSS), 445 to 467 (TSSS…ALAS), and 492 to 639 (VHFH…MSES). 2 stretches are compositionally biased toward low complexity: residues 408–430 (DSSG…HGSS) and 446–461 (SSSS…EDSS). Composition is skewed to basic residues over residues 492-504 (VHFH…HYRR) and 512-523 (SHPHRSKRRTKV). The span at 574-588 (QQSMPQAASVVQGSS) shows a compositional bias: polar residues.

The protein belongs to the ZNRF3 family.

It is found in the cell membrane. The protein resides in the endoplasmic reticulum membrane. It localises to the nucleus envelope. It carries out the reaction S-ubiquitinyl-[E2 ubiquitin-conjugating enzyme]-L-cysteine + [acceptor protein]-L-lysine = [E2 ubiquitin-conjugating enzyme]-L-cysteine + N(6)-ubiquitinyl-[acceptor protein]-L-lysine.. It functions in the pathway protein modification; protein ubiquitination. E3 ubiquitin-protein ligase that acts as a negative regulator of the Wnt signaling pathway by mediating the ubiquitination, endocytosis and subsequent degradation of Wnt receptor complex components Frizzled. Acts on both canonical and non-canonical Wnt signaling pathway. Along with RSPO2 and ZNRF3, constitutes a master switch that governs limb specification. This chain is E3 ubiquitin-protein ligase RNF43 (rnf43), found in Xenopus tropicalis (Western clawed frog).